Consider the following 64-residue polypeptide: Disintegrin lebein-1-beta (64 aa).

Residues 1 to 64 enclose the Disintegrin domain; the sequence is NSGNPCCDPV…SDCPRNPYKD (64 aa). 4 disulfides stabilise this stretch: Cys-6–Cys-29, Cys-20–Cys-26, Cys-25–Cys-50, and Cys-38–Cys-57. The short motif at 42 to 44 is the Cell attachment site element; that stretch reads RGD.

This sequence belongs to the disintegrin family. Dimeric disintegrin subfamily. In terms of assembly, heterodimer with subunit alpha; disulfide-linked. In terms of tissue distribution, expressed by the venom gland.

It is found in the secreted. Its function is as follows. Strongly inhibits ADP-induced platelet aggregation on human platelet-rich plasma. Also avidly binds to the laminin-binding beta-1 integrins (alpha-3/beta-1, alpha-6/beta-1, and alpha-7/beta-1) in an RGD-independent manner. The protein is Disintegrin lebein-1-beta of Macrovipera lebetinus (Levantine viper).